The chain runs to 484 residues: NADH-ubiquinone oxidoreductase chain 4 (484 aa).

The next 14 helical transmembrane spans lie at Met1–Gly21, Leu33–Asp53, Val77–Leu97, Tyr109–Asp129, Ile130–Ile150, Phe162–Ile182, Leu206–Val226, Pro236–Met256, Phe270–Leu290, Phe295–Phe315, Leu326–Val346, Tyr365–Leu385, Val405–Tyr425, and Phe448–Ile468.

Belongs to the complex I subunit 4 family.

The protein localises to the mitochondrion inner membrane. It catalyses the reaction a ubiquinone + NADH + 5 H(+)(in) = a ubiquinol + NAD(+) + 4 H(+)(out). Functionally, core subunit of the mitochondrial membrane respiratory chain NADH dehydrogenase (Complex I) that is believed to belong to the minimal assembly required for catalysis. Complex I functions in the transfer of electrons from NADH to the respiratory chain. The immediate electron acceptor for the enzyme is believed to be ubiquinone. The chain is NADH-ubiquinone oxidoreductase chain 4 (ND4) from Mycosarcoma maydis (Corn smut fungus).